The primary structure comprises 100 residues: Sec-independent protein translocase protein TatA (100 aa).

Residues 1-21 (MGALRPWHIAVLVVVLILLFG) form a helical membrane-spanning segment. Residues 46–58 (LHDDDRDLAEKAD) are compositionally biased toward basic and acidic residues. The tract at residues 46 to 100 (LHDDDRDLAEKADAQAGYQPMPPQVQQGQHPQQSPYPAPPQQQPVVDPVQRTRDS) is disordered. Over residues 69 to 78 (QVQQGQHPQQ) the composition is skewed to low complexity.

This sequence belongs to the TatA/E family. The Tat system comprises two distinct complexes: a TatABC complex, containing multiple copies of TatA, TatB and TatC subunits, and a separate TatA complex, containing only TatA subunits. Substrates initially bind to the TatABC complex, which probably triggers association of the separate TatA complex to form the active translocon.

It localises to the cell membrane. Part of the twin-arginine translocation (Tat) system that transports large folded proteins containing a characteristic twin-arginine motif in their signal peptide across membranes. TatA could form the protein-conducting channel of the Tat system. This Salinispora tropica (strain ATCC BAA-916 / DSM 44818 / JCM 13857 / NBRC 105044 / CNB-440) protein is Sec-independent protein translocase protein TatA.